Consider the following 266-residue polypeptide: Diphthine synthase (266 aa).

S-adenosyl-L-methionine contacts are provided by residues Leu9, Asp84, Val87, 112–113, Leu169, Ala210, and His235; that span reads SI.

Belongs to the diphthine synthase family. As to quaternary structure, homodimer.

The enzyme catalyses 2-[(3S)-amino-3-carboxypropyl]-L-histidyl-[translation elongation factor 2] + 3 S-adenosyl-L-methionine = diphthine-[translation elongation factor 2] + 3 S-adenosyl-L-homocysteine + 3 H(+). The protein operates within protein modification; peptidyl-diphthamide biosynthesis. In terms of biological role, S-adenosyl-L-methionine-dependent methyltransferase that catalyzes the trimethylation of the amino group of the modified target histidine residue in translation elongation factor 2 (EF-2), to form an intermediate called diphthine. The three successive methylation reactions represent the second step of diphthamide biosynthesis. The protein is Diphthine synthase of Methanosarcina acetivorans (strain ATCC 35395 / DSM 2834 / JCM 12185 / C2A).